The sequence spans 510 residues: ATP synthase subunit alpha (510 aa).

169–176 (GDRQTGKT) provides a ligand contact to ATP.

This sequence belongs to the ATPase alpha/beta chains family. As to quaternary structure, F-type ATPases have 2 components, CF(1) - the catalytic core - and CF(0) - the membrane proton channel. CF(1) has five subunits: alpha(3), beta(3), gamma(1), delta(1), epsilon(1). CF(0) has four main subunits: a(1), b(1), b'(1) and c(9-12).

It is found in the cell inner membrane. The catalysed reaction is ATP + H2O + 4 H(+)(in) = ADP + phosphate + 5 H(+)(out). Its function is as follows. Produces ATP from ADP in the presence of a proton gradient across the membrane. The alpha chain is a regulatory subunit. The chain is ATP synthase subunit alpha from Rhodopseudomonas palustris (strain BisA53).